Here is a 629-residue protein sequence, read N- to C-terminus: tRNA uridine 5-carboxymethylaminomethyl modification enzyme MnmG (629 aa).

G13–G18 provides a ligand contact to FAD. G273–F287 contributes to the NAD(+) binding site.

The protein belongs to the MnmG family. As to quaternary structure, homodimer. Heterotetramer of two MnmE and two MnmG subunits. Requires FAD as cofactor.

It is found in the cytoplasm. NAD-binding protein involved in the addition of a carboxymethylaminomethyl (cmnm) group at the wobble position (U34) of certain tRNAs, forming tRNA-cmnm(5)s(2)U34. The sequence is that of tRNA uridine 5-carboxymethylaminomethyl modification enzyme MnmG from Shewanella pealeana (strain ATCC 700345 / ANG-SQ1).